The sequence spans 86 residues: Small ribosomal subunit protein uS17 (86 aa).

The protein belongs to the universal ribosomal protein uS17 family. In terms of assembly, part of the 30S ribosomal subunit.

Functionally, one of the primary rRNA binding proteins, it binds specifically to the 5'-end of 16S ribosomal RNA. This Streptococcus pyogenes serotype M6 (strain ATCC BAA-946 / MGAS10394) protein is Small ribosomal subunit protein uS17.